Consider the following 982-residue polypeptide: Hunchback-like protein (982 aa).

The disordered stretch occupies residues 87-194 (QPGEKIHPDG…SNYQVTSEPV (108 aa)). A compositionally biased stretch (basic and acidic residues) spans 101 to 110 (PKEDGRKSSE). Over residues 111–132 (HTNSYDVSASQSPSNDGAQSDS) the composition is skewed to polar residues. Residues 142-152 (CMTETEMDTDE) are compositionally biased toward acidic residues. Residues 153-175 (KDSTIKPEDQATPKLEEGSDSKP) show a composition bias toward basic and acidic residues. Positions 176 to 193 (ESTSVEGTSSNYQVTSEP) are enriched in polar residues. C2H2-type zinc fingers lie at residues 336–358 (LVCPICGFMCPSKFHFNSHMNTH), 361–384 (HQCSMCDYTSRTEGRLKKHMRESH), 538–560 (FKCKQCGHQSLSKDDQWAHARTH), 567–589 (LNCQHCNFVTEYKHHLEYHYRNH), 595–617 (FQCKKCAYNCVNKSMLNSHMKSH), 623–647 (FRCMDCTYATKYCHSLKLHLKKYNH), and 734–756 (LKCSACDFVASSADEKMRHSMSH). A disordered region spans residues 377-415 (KKHMRESHTVEEQLRAGFESEPAKESASSPKNLSLSKDG). Residues 811 to 896 (EEMDQGSDSA…PPLHSSSIVA (86 aa)) are disordered. Composition is skewed to polar residues over residues 816-831 (GSDSAVSPTGSSQISS) and 843-862 (SLEQISARANGNNSPMSNDS). Over residues 863 to 875 (AMEKDGESADDAP) the composition is skewed to basic and acidic residues. 2 C2H2-type zinc fingers span residues 929 to 951 (FYCDHCKIPFDTQQVLDSHMRFH) and 957 to 981 (FMCSDCQYQAFNELSFALHMYQARH).

Belongs to the hunchback C2H2-type zinc-finger protein family. Expressed primarily in ectodermal cells during embryonic and larval development.

The protein resides in the nucleus. In terms of biological role, required for the late stages of development. Plays a role in the developmental timing of postembryonic hypodermal seam cell fusion events and adult alae production. This chain is Hunchback-like protein, found in Caenorhabditis elegans.